The following is a 371-amino-acid chain: DNA replication and repair protein RecF (371 aa).

Residue 30–37 (GSNGQGKT) participates in ATP binding.

Belongs to the RecF family.

The protein resides in the cytoplasm. The RecF protein is involved in DNA metabolism; it is required for DNA replication and normal SOS inducibility. RecF binds preferentially to single-stranded, linear DNA. It also seems to bind ATP. This Acidothermus cellulolyticus (strain ATCC 43068 / DSM 8971 / 11B) protein is DNA replication and repair protein RecF.